A 261-amino-acid polypeptide reads, in one-letter code: MAHQAHAYHMVDPSPWPLTGAVAALLMTSGLAVWFHFHSMYLLYLGLTLLLLTMVQWWRDIIREGTFQGHHTPPVQKGLRYGMILFITSEVFFFLGFFWAFYHSSLAPTPELGGCWPPTGIYPLDPFEVPLLNTAVLLASGVTVTWAHHSLMEGNRKEAIQALTLTVLLGFYFTALQAMEYYEAPFTIADGVYGSTFFVATGFHGLHVIIGSTFLMVCLLRQIQYHFTSEHHFGFERAAWYWHFVDVVWLFLYVSIYWWGS.

Over 1-15 (MAHQAHAYHMVDPSP) the chain is Mitochondrial matrix. A helical membrane pass occupies residues 16-34 (WPLTGAVAALLMTSGLAVW). Residues 35 to 40 (FHFHSM) are Mitochondrial intermembrane-facing. Residues 41–66 (YLLYLGLTLLLLTMVQWWRDIIREGT) form a helical membrane-spanning segment. The Mitochondrial matrix portion of the chain corresponds to 67–72 (FQGHHT). A helical membrane pass occupies residues 73-105 (PPVQKGLRYGMILFITSEVFFFLGFFWAFYHSS). Topologically, residues 106–128 (LAPTPELGGCWPPTGIYPLDPFE) are mitochondrial intermembrane. Residues 129–152 (VPLLNTAVLLASGVTVTWAHHSLM) form a helical membrane-spanning segment. The Mitochondrial matrix portion of the chain corresponds to 153 to 155 (EGN). The chain crosses the membrane as a helical span at residues 156-183 (RKEAIQALTLTVLLGFYFTALQAMEYYE). The Mitochondrial intermembrane segment spans residues 184–190 (APFTIAD). Residues 191-223 (GVYGSTFFVATGFHGLHVIIGSTFLMVCLLRQI) form a helical membrane-spanning segment. The Mitochondrial matrix portion of the chain corresponds to 224 to 232 (QYHFTSEHH). A helical transmembrane segment spans residues 233 to 256 (FGFERAAWYWHFVDVVWLFLYVSI). Residues 257–261 (YWWGS) lie on the Mitochondrial intermembrane side of the membrane.

This sequence belongs to the cytochrome c oxidase subunit 3 family. Component of the cytochrome c oxidase (complex IV, CIV), a multisubunit enzyme composed of 14 subunits. The complex is composed of a catalytic core of 3 subunits MT-CO1, MT-CO2 and MT-CO3, encoded in the mitochondrial DNA, and 11 supernumerary subunits COX4I, COX5A, COX5B, COX6A, COX6B, COX6C, COX7A, COX7B, COX7C, COX8 and NDUFA4, which are encoded in the nuclear genome. The complex exists as a monomer or a dimer and forms supercomplexes (SCs) in the inner mitochondrial membrane with NADH-ubiquinone oxidoreductase (complex I, CI) and ubiquinol-cytochrome c oxidoreductase (cytochrome b-c1 complex, complex III, CIII), resulting in different assemblies (supercomplex SCI(1)III(2)IV(1) and megacomplex MCI(2)III(2)IV(2)).

The protein resides in the mitochondrion inner membrane. The enzyme catalyses 4 Fe(II)-[cytochrome c] + O2 + 8 H(+)(in) = 4 Fe(III)-[cytochrome c] + 2 H2O + 4 H(+)(out). Its function is as follows. Component of the cytochrome c oxidase, the last enzyme in the mitochondrial electron transport chain which drives oxidative phosphorylation. The respiratory chain contains 3 multisubunit complexes succinate dehydrogenase (complex II, CII), ubiquinol-cytochrome c oxidoreductase (cytochrome b-c1 complex, complex III, CIII) and cytochrome c oxidase (complex IV, CIV), that cooperate to transfer electrons derived from NADH and succinate to molecular oxygen, creating an electrochemical gradient over the inner membrane that drives transmembrane transport and the ATP synthase. Cytochrome c oxidase is the component of the respiratory chain that catalyzes the reduction of oxygen to water. Electrons originating from reduced cytochrome c in the intermembrane space (IMS) are transferred via the dinuclear copper A center (CU(A)) of subunit 2 and heme A of subunit 1 to the active site in subunit 1, a binuclear center (BNC) formed by heme A3 and copper B (CU(B)). The BNC reduces molecular oxygen to 2 water molecules using 4 electrons from cytochrome c in the IMS and 4 protons from the mitochondrial matrix. This is Cytochrome c oxidase subunit 3 (MT-CO3) from Squalus acanthias (Spiny dogfish).